A 314-amino-acid polypeptide reads, in one-letter code: DNA-directed RNA polymerase subunit alpha (314 aa).

The segment at 1–228 (MIEIEKPRIE…EHLNIFVGLT (228 aa)) is alpha N-terminal domain (alpha-NTD). The alpha C-terminal domain (alpha-CTD) stretch occupies residues 245 to 314 (KEKVLEMSIE…DLGLGLRKED (70 aa)).

This sequence belongs to the RNA polymerase alpha chain family. As to quaternary structure, homodimer. The RNAP catalytic core consists of 2 alpha, 1 beta, 1 beta' and 1 omega subunit. When a sigma factor is associated with the core the holoenzyme is formed, which can initiate transcription.

The enzyme catalyses RNA(n) + a ribonucleoside 5'-triphosphate = RNA(n+1) + diphosphate. Its function is as follows. DNA-dependent RNA polymerase catalyzes the transcription of DNA into RNA using the four ribonucleoside triphosphates as substrates. The sequence is that of DNA-directed RNA polymerase subunit alpha from Staphylococcus saprophyticus subsp. saprophyticus (strain ATCC 15305 / DSM 20229 / NCIMB 8711 / NCTC 7292 / S-41).